Reading from the N-terminus, the 628-residue chain is Chaperone protein HtpG (628 aa).

Residues 1 to 340 are a; substrate-binding; it reads MKGQETRGFQ…SNDLPLNVSR (340 aa). The segment at 341-556 is b; the sequence is EILQDSRVTQ…ADDMTTQMAK (216 aa). The tract at residues 557-628 is c; sequence LFAAAGQAAP…IRRMNQLLNA (72 aa).

It belongs to the heat shock protein 90 family. As to quaternary structure, homodimer.

The protein resides in the cytoplasm. Molecular chaperone. Has ATPase activity. This Sodalis glossinidius (strain morsitans) protein is Chaperone protein HtpG.